The following is a 181-amino-acid chain: MAGTNDSCPLVKNILLLDSEGKRVAVKYYSDDWATNASKLAFEKYVFSKTSKTNARTEAEITLLESNIVVYKFAQDLHFFVTGGENENELVLSSVLQGFFDAVALLLRNNVEKMEALENLDLIFLCLDEMVDQGMVLETDANVIAGKVAMQSAEASGSLSEQTLTQALATAREHLARSLLT.

It belongs to the adaptor complexes small subunit family. As to quaternary structure, oligomeric complex that consists of at least the alpha, beta, beta', gamma, delta, epsilon and zeta subunits.

It is found in the cytoplasm. The protein resides in the golgi apparatus membrane. It localises to the cytoplasmic vesicle. Its subcellular location is the COPI-coated vesicle membrane. Its function is as follows. The coatomer is a cytosolic protein complex that binds to dilysine motifs and reversibly associates with Golgi non-clathrin-coated vesicles, which further mediate biosynthetic protein transport from the ER, via the Golgi up to the trans Golgi network. Coatomer complex is required for budding from Golgi membranes, and is essential for the retrograde Golgi-to-ER transport of dilysine-tagged proteins. The zeta subunit may be involved in regulating the coat assembly and, hence, the rate of biosynthetic protein transport due to its association-dissociation properties with the coatomer complex. The protein is Coatomer subunit zeta-3 of Arabidopsis thaliana (Mouse-ear cress).